A 273-amino-acid chain; its full sequence is Dermonecrotic toxin LdSicTox-alphaIB3ai (273 aa).

The active site involves histidine 5. Positions 25 and 27 each coordinate Mg(2+). The Nucleophile role is filled by histidine 41. 2 disulfide bridges follow: cysteine 45–cysteine 51 and cysteine 47–cysteine 190. Mg(2+) is bound at residue aspartate 85.

This sequence belongs to the arthropod phospholipase D family. Class II subfamily. Requires Mg(2+) as cofactor. In terms of tissue distribution, expressed by the venom gland.

The protein localises to the secreted. The catalysed reaction is an N-(acyl)-sphingosylphosphocholine = an N-(acyl)-sphingosyl-1,3-cyclic phosphate + choline. It carries out the reaction an N-(acyl)-sphingosylphosphoethanolamine = an N-(acyl)-sphingosyl-1,3-cyclic phosphate + ethanolamine. The enzyme catalyses a 1-acyl-sn-glycero-3-phosphocholine = a 1-acyl-sn-glycero-2,3-cyclic phosphate + choline. It catalyses the reaction a 1-acyl-sn-glycero-3-phosphoethanolamine = a 1-acyl-sn-glycero-2,3-cyclic phosphate + ethanolamine. Dermonecrotic toxins cleave the phosphodiester linkage between the phosphate and headgroup of certain phospholipids (sphingolipid and lysolipid substrates), forming an alcohol (often choline) and a cyclic phosphate. This toxin acts on sphingomyelin (SM). It may also act on ceramide phosphoethanolamine (CPE), lysophosphatidylcholine (LPC) and lysophosphatidylethanolamine (LPE), but not on lysophosphatidylserine (LPS), and lysophosphatidylglycerol (LPG). It acts by transphosphatidylation, releasing exclusively cyclic phosphate products as second products. Induces dermonecrosis, hemolysis, increased vascular permeability, edema, inflammatory response, and platelet aggregation. The polypeptide is Dermonecrotic toxin LdSicTox-alphaIB3ai (Loxosceles deserta (Desert recluse spider)).